The sequence spans 363 residues: uncharacterized protein (363 aa).

29–36 (GSINSGKT) provides a ligand contact to ATP.

It belongs to the archaeal ATPase family.

This is an uncharacterized protein from Methanocaldococcus jannaschii (strain ATCC 43067 / DSM 2661 / JAL-1 / JCM 10045 / NBRC 100440) (Methanococcus jannaschii).